The sequence spans 196 residues: UMP-CMP kinase (196 aa).

Residue glycine 13 to threonine 18 participates in ATP binding. Position 33 is a phosphoserine (serine 33). The tract at residues serine 33–valine 63 is NMP. Arginine 39 contributes to the a ribonucleoside 5'-phosphate binding site. Lysine 43 and lysine 55 each carry N6-acetyllysine. A ribonucleoside 5'-phosphate is bound at residue lysine 61 to valine 63. Lysine 73 is covalently cross-linked (Glycyl lysine isopeptide (Lys-Gly) (interchain with G-Cter in SUMO2)). An a ribonucleoside 5'-phosphate-binding site is contributed by glycine 93–arginine 96. A CMP-binding site is contributed by asparagine 100. Lysine 106 carries the post-translational modification N6-succinyllysine. Positions glutamate 133–aspartate 143 are LID. An ATP-binding site is contributed by arginine 134. A ribonucleoside 5'-phosphate contacts are provided by arginine 140 and arginine 151. Position 179 (lysine 179) interacts with ATP. The residue at position 180 (serine 180) is a Phosphoserine.

The protein belongs to the adenylate kinase family. UMP-CMP kinase subfamily. In terms of assembly, monomer. Mg(2+) is required as a cofactor.

It is found in the nucleus. Its subcellular location is the cytoplasm. The catalysed reaction is CMP + ATP = CDP + ADP. It carries out the reaction dCMP + ATP = dCDP + ADP. The enzyme catalyses UMP + ATP = UDP + ADP. It catalyses the reaction a 2'-deoxyribonucleoside 5'-diphosphate + ATP = a 2'-deoxyribonucleoside 5'-triphosphate + ADP. The catalysed reaction is a ribonucleoside 5'-diphosphate + ATP = a ribonucleoside 5'-triphosphate + ADP. Catalyzes the phosphorylation of pyrimidine nucleoside monophosphates at the expense of ATP. Plays an important role in de novo pyrimidine nucleotide biosynthesis. Has preference for UMP and CMP as phosphate acceptors. Also displays broad nucleoside diphosphate kinase activity. This is UMP-CMP kinase (Cmpk1) from Rattus norvegicus (Rat).